A 132-amino-acid polypeptide reads, in one-letter code: Large ribosomal subunit protein uL14 (132 aa).

The protein belongs to the universal ribosomal protein uL14 family. Part of the 50S ribosomal subunit. Forms a cluster with proteins L3 and L24e, part of which may contact the 16S rRNA in 2 intersubunit bridges.

Binds to 23S rRNA. Forms part of two intersubunit bridges in the 70S ribosome. This is Large ribosomal subunit protein uL14 from Natronomonas pharaonis (strain ATCC 35678 / DSM 2160 / CIP 103997 / JCM 8858 / NBRC 14720 / NCIMB 2260 / Gabara) (Halobacterium pharaonis).